The primary structure comprises 87 residues: Large ribosomal subunit protein bL27 (87 aa).

This sequence belongs to the bacterial ribosomal protein bL27 family.

In Dichelobacter nodosus (strain VCS1703A), this protein is Large ribosomal subunit protein bL27.